We begin with the raw amino-acid sequence, 182 residues long: MPVAALIREEIEIPENVNVEINGNTVAVKSGAKELRRDLMYPGIEISTEDGKVVIECTFPRKVQTAIVGTYRSHIQNMITGVTDGFEYKLVIRYAHFPMKVSAKGNTVTIDNFLGEKYTRTAKIMDGVTVKVSGEEVIVSGANKEFVGQTAANIEQATKVKGRDTRIFQDGIYIVEKAGKVL.

Belongs to the universal ribosomal protein uL6 family. In terms of assembly, part of the 50S ribosomal subunit.

Functionally, this protein binds to the 23S rRNA, and is important in its secondary structure. It is located near the subunit interface in the base of the L7/L12 stalk, and near the tRNA binding site of the peptidyltransferase center. This Methanococcus maripaludis (strain C5 / ATCC BAA-1333) protein is Large ribosomal subunit protein uL6.